The primary structure comprises 374 residues: MKQENIISTTEDLKKIVNKALKLDAVGLDTEFVWERTYYPQLGLIQIALSDEECYAIDPLSIKDLSPLGELLADRNTIKILHDAPQDLIIMSQATGATPQNIFDTRLAAGFAGSISTISLLQLVSEQLETELDKSETRTNWLKRPLTEKQLSYSLNDVRYLRATRVILLSKIIGPKIKSWLQEELNLLNNPANYSTIADESRYKKVKGVNKLDRKSIGVAQEIATWREQKARELNRPRGHVIKDDILLEIAAIRPTRPEELANTAISTKAAERYGNDICQATARALNKKEVDLPHQQKRSQLSSQEKGALAQLKELITLKCDILGIDPALLGNSNELKKIIQTLYKGKTTHMRQSFGWRKEFLKDFYQIHRDTI.

In terms of domain architecture, 3'-5' exonuclease spans 6–171; the sequence is IISTTEDLKK…RATRVILLSK (166 aa). The HRDC domain occupies 213–292; that stretch reads DRKSIGVAQE…ARALNKKEVD (80 aa).

Belongs to the RNase D family. A divalent metal cation serves as cofactor.

It localises to the cytoplasm. It carries out the reaction Exonucleolytic cleavage that removes extra residues from the 3'-terminus of tRNA to produce 5'-mononucleotides.. Functionally, exonuclease involved in the 3' processing of various precursor tRNAs. Initiates hydrolysis at the 3'-terminus of an RNA molecule and releases 5'-mononucleotides. This Desulfotalea psychrophila (strain LSv54 / DSM 12343) protein is Ribonuclease D.